The chain runs to 426 residues: Cytochrome c biogenesis protein CcsB (426 aa).

Transmembrane regions (helical) follow at residues 14 to 34 (LKIA…GTLI), 72 to 92 (SFWF…CSFR), and 162 to 182 (LGPI…TYGS).

The protein belongs to the Ccs1/CcsB family. In terms of assembly, may interact with CcsA.

The protein resides in the cellular thylakoid membrane. Required during biogenesis of c-type cytochromes (cytochrome c6 and cytochrome f) at the step of heme attachment. The protein is Cytochrome c biogenesis protein CcsB of Prochlorococcus marinus (strain NATL2A).